Consider the following 457-residue polypeptide: MDHLPIFCQLRDRDCLIVGGGDVAERKARLLLDAGARLTVNALAFIPQFTAWADAGMLTLVEGPFDESLLDTCWLAIAATDDDALNQRVSEAAESRRIFCNVVDAPKAASFIMPSIIDRSPLMVAVSSGGTSPVLARLLREKLESLLPLHLGQVAKYAGQLRGRVKQQFATMGERRRFWEKLFVNDRLAQSLANNDQKAITETTEQLINEPLDHRGEVVLVGAGPGDAGLLTLKGLQQIQQADVVVYDRLVSDDIMNLIRRDADRVFVGKRAGYHCVPQEEINQILLREAQKGKRVVRLKGGDPFIFGRGGEELETLCNAGIPFSVVPGITAASGCSAYSGIPLTHRDYAQSVRLITGHLKTGGELDWENLAAEKQTLVFYMGLNQAATIQQKLIEYGMPGEMPVAIVENGTAVTQRVIDGTLTQLGELAQQMNSPSLIIIGRVVGLRDKLNWFSNH.

Residues 1 to 204 (MDHLPIFCQL…NDQKAITETT (204 aa)) form a precorrin-2 dehydrogenase /sirohydrochlorin ferrochelatase region. Residues 22 to 23 (DV) and 43 to 44 (LA) contribute to the NAD(+) site. S128 carries the post-translational modification Phosphoserine. Positions 216–457 (GEVVLVGAGP…RDKLNWFSNH (242 aa)) are uroporphyrinogen-III C-methyltransferase. P225 contacts S-adenosyl-L-methionine. The active-site Proton acceptor is D248. The Proton donor role is filled by K270. S-adenosyl-L-methionine-binding positions include 301–303 (GGD), I306, 331–332 (TA), M382, and G411.

This sequence in the N-terminal section; belongs to the precorrin-2 dehydrogenase / sirohydrochlorin ferrochelatase family. In the C-terminal section; belongs to the precorrin methyltransferase family.

The catalysed reaction is uroporphyrinogen III + 2 S-adenosyl-L-methionine = precorrin-2 + 2 S-adenosyl-L-homocysteine + H(+). It catalyses the reaction precorrin-2 + NAD(+) = sirohydrochlorin + NADH + 2 H(+). It carries out the reaction siroheme + 2 H(+) = sirohydrochlorin + Fe(2+). It functions in the pathway cofactor biosynthesis; adenosylcobalamin biosynthesis; precorrin-2 from uroporphyrinogen III: step 1/1. It participates in cofactor biosynthesis; adenosylcobalamin biosynthesis; sirohydrochlorin from precorrin-2: step 1/1. Its pathway is porphyrin-containing compound metabolism; siroheme biosynthesis; precorrin-2 from uroporphyrinogen III: step 1/1. The protein operates within porphyrin-containing compound metabolism; siroheme biosynthesis; siroheme from sirohydrochlorin: step 1/1. It functions in the pathway porphyrin-containing compound metabolism; siroheme biosynthesis; sirohydrochlorin from precorrin-2: step 1/1. Functionally, multifunctional enzyme that catalyzes the SAM-dependent methylations of uroporphyrinogen III at position C-2 and C-7 to form precorrin-2 via precorrin-1. Then it catalyzes the NAD-dependent ring dehydrogenation of precorrin-2 to yield sirohydrochlorin. Finally, it catalyzes the ferrochelation of sirohydrochlorin to yield siroheme. The chain is Siroheme synthase from Escherichia coli O45:K1 (strain S88 / ExPEC).